We begin with the raw amino-acid sequence, 276 residues long: Probable ABC transporter permease protein PH1036 (276 aa).

The next 6 helical transmembrane spans lie at 12-32 (IAWS…MASV), 75-95 (IVAI…AYAF), 109-129 (FIVL…YFLL), 137-157 (TFRG…IFFM), 186-206 (IVLP…FTWV), and 241-261 (GLLT…YALF). One can recognise an ABC transmembrane type-1 domain in the interval 70–261 (LKNSLIVAIP…LVPLLVYALF (192 aa)).

This sequence belongs to the binding-protein-dependent transport system permease family. MalFG subfamily.

The protein resides in the cell membrane. In terms of biological role, probably part of a binding-protein-dependent transport system PH1036/38/39. Probably responsible for the translocation of the substrate across the membrane. This is Probable ABC transporter permease protein PH1036 from Pyrococcus horikoshii (strain ATCC 700860 / DSM 12428 / JCM 9974 / NBRC 100139 / OT-3).